The chain runs to 118 residues: Large ribosomal subunit protein bL20 (118 aa).

It belongs to the bacterial ribosomal protein bL20 family.

Functionally, binds directly to 23S ribosomal RNA and is necessary for the in vitro assembly process of the 50S ribosomal subunit. It is not involved in the protein synthesizing functions of that subunit. This is Large ribosomal subunit protein bL20 from Hamiltonella defensa subsp. Acyrthosiphon pisum (strain 5AT).